Consider the following 500-residue polypeptide: 4-aminobutyrate aminotransferase, mitochondrial (500 aa).

A mitochondrion-targeting transit peptide spans 1–28 (MASVLLTRRLACSFRHNHRLLVPGWRHI). Residue cysteine 163 coordinates [2Fe-2S] cluster. 164–165 (GS) contributes to the pyridoxal 5'-phosphate binding site. Cysteine 166 contributes to the [2Fe-2S] cluster binding site. Arginine 220 is a binding site for substrate. Lysine 231 is modified (N6-succinyllysine). Lysine 252 is subject to N6-acetyllysine; alternate. At lysine 252 the chain carries N6-succinyllysine; alternate. An N6-acetyllysine mark is found at lysine 279 and lysine 318. Lysine 357 carries the N6-(pyridoxal phosphate)lysine modification. Threonine 381 is a binding site for pyridoxal 5'-phosphate. Lysine 413 is modified (N6-acetyllysine; alternate). N6-succinyllysine; alternate is present on lysine 413. N6-acetyllysine occurs at positions 452 and 470.

The protein belongs to the class-III pyridoxal-phosphate-dependent aminotransferase family. Homodimer; disulfide-linked. Requires pyridoxal 5'-phosphate as cofactor. [2Fe-2S] cluster is required as a cofactor.

It localises to the mitochondrion matrix. The enzyme catalyses 4-aminobutanoate + 2-oxoglutarate = succinate semialdehyde + L-glutamate. It carries out the reaction (S)-3-amino-2-methylpropanoate + 2-oxoglutarate = 2-methyl-3-oxopropanoate + L-glutamate. Functionally, catalyzes the conversion of gamma-aminobutyrate and L-beta-aminoisobutyrate to succinate semialdehyde and methylmalonate semialdehyde, respectively. Can also convert delta-aminovalerate and beta-alanine. The polypeptide is 4-aminobutyrate aminotransferase, mitochondrial (ABAT) (Sus scrofa (Pig)).